Here is a 584-residue protein sequence, read N- to C-terminus: DNA ligase (584 aa).

Residue Glu-249 coordinates ATP. The active-site N6-AMP-lysine intermediate is Lys-251. Arg-256, Arg-271, Glu-301, Phe-341, Arg-416, and Lys-422 together coordinate ATP.

Belongs to the ATP-dependent DNA ligase family. The cofactor is Mg(2+).

It carries out the reaction ATP + (deoxyribonucleotide)n-3'-hydroxyl + 5'-phospho-(deoxyribonucleotide)m = (deoxyribonucleotide)n+m + AMP + diphosphate.. Its function is as follows. DNA ligase that seals nicks in double-stranded DNA during DNA replication, DNA recombination and DNA repair. The chain is DNA ligase from Pyrobaculum neutrophilum (strain DSM 2338 / JCM 9278 / NBRC 100436 / V24Sta) (Thermoproteus neutrophilus).